We begin with the raw amino-acid sequence, 141 residues long: Large ribosomal subunit protein uL22 (141 aa).

It belongs to the universal ribosomal protein uL22 family. As to quaternary structure, part of the 50S ribosomal subunit.

This protein binds specifically to 23S rRNA; its binding is stimulated by other ribosomal proteins, e.g. L4, L17, and L20. It is important during the early stages of 50S assembly. It makes multiple contacts with different domains of the 23S rRNA in the assembled 50S subunit and ribosome. In terms of biological role, the globular domain of the protein is located near the polypeptide exit tunnel on the outside of the subunit, while an extended beta-hairpin is found that lines the wall of the exit tunnel in the center of the 70S ribosome. The chain is Large ribosomal subunit protein uL22 from Frankia alni (strain DSM 45986 / CECT 9034 / ACN14a).